The chain runs to 537 residues: Probable protein kinase UbiB (537 aa).

The helical transmembrane segment at 24-44 threads the bilayer; sequence LLFEQPLLPWWLASLRLLMPW. One can recognise a Protein kinase domain in the interval 126 to 494; the sequence is RFDVEPLASA…RRRQGDNWAL (369 aa). ATP contacts are provided by residues 132–140 and K154; that span reads LASASVAQV. D289 (proton acceptor) is an active-site residue. A run of 2 helical transmembrane segments spans residues 493 to 513 and 515 to 535; these read ALRL…AGAV and LSAP…YLIV.

The protein belongs to the ABC1 family. UbiB subfamily.

It is found in the cell inner membrane. The protein operates within cofactor biosynthesis; ubiquinone biosynthesis [regulation]. In terms of biological role, is probably a protein kinase regulator of UbiI activity which is involved in aerobic coenzyme Q (ubiquinone) biosynthesis. This chain is Probable protein kinase UbiB, found in Pseudomonas entomophila (strain L48).